The sequence spans 130 residues: Small ribosomal subunit protein uS11c (130 aa).

It belongs to the universal ribosomal protein uS11 family. As to quaternary structure, part of the 30S ribosomal subunit.

Its subcellular location is the plastid. The protein localises to the chloroplast. The sequence is that of Small ribosomal subunit protein uS11c from Anthoceros angustus (Hornwort).